A 131-amino-acid polypeptide reads, in one-letter code: Holo-[acyl-carrier-protein] synthase (131 aa).

Residues aspartate 8 and glutamate 59 each coordinate Mg(2+).

This sequence belongs to the P-Pant transferase superfamily. AcpS family. It depends on Mg(2+) as a cofactor.

The protein localises to the cytoplasm. The catalysed reaction is apo-[ACP] + CoA = holo-[ACP] + adenosine 3',5'-bisphosphate + H(+). Transfers the 4'-phosphopantetheine moiety from coenzyme A to a Ser of acyl-carrier-protein. The sequence is that of Holo-[acyl-carrier-protein] synthase from Rickettsia conorii (strain ATCC VR-613 / Malish 7).